The primary structure comprises 476 residues: tRNA (cytosine(72)-C(5))-methyltransferase NSUN6 (476 aa).

A PUA domain is found at 111–203 (QGEVIVGAQC…IGIRMTEPIY (93 aa)). Residues 242–248 (CAAPGGK), Asp-266, Asp-293, and Asp-323 contribute to the S-adenosyl-L-methionine site. The Nucleophile role is filled by Cys-373. Lys-419 carries the N6-acetyllysine modification.

This sequence belongs to the class I-like SAM-binding methyltransferase superfamily. RsmB/NOP family.

The protein localises to the cytoplasm. The catalysed reaction is cytidine(72) in tRNA(Thr) + S-adenosyl-L-methionine = 5-methylcytidine(72) in tRNA(Thr) + S-adenosyl-L-homocysteine + H(+). It catalyses the reaction cytidine(72) in tRNA(Cys) + S-adenosyl-L-methionine = 5-methylcytidine(72) in tRNA(Cys) + S-adenosyl-L-homocysteine + H(+). In terms of biological role, S-adenosyl-L-methionine-dependent methyltransferase that specifically methylates the C5 position of cytosine 72 in tRNA(Thr)(TGT) and tRNA(Cys)(GCA). In vitro also methylates tRNA(Thr)(AGT). Methylation requires, in the acceptor stem region, the presence of the 3'-CCA terminus, the target site C72, the discriminator base U73, and the second and third base pairs (2:71 and 3:70) in the tRNA substrates. This chain is tRNA (cytosine(72)-C(5))-methyltransferase NSUN6, found in Mus musculus (Mouse).